We begin with the raw amino-acid sequence, 363 residues long: NADH-quinone oxidoreductase subunit H (363 aa).

Transmembrane regions (helical) follow at residues 29-49, 62-82, 94-114, 127-147, 166-186, 202-222, 239-257, 264-286, 293-313, and 339-359; these read VLKI…YVVW, GPMY…KLLF, VIFV…WAVV, VGLL…ILAG, VVSY…AAGS, FFDW…VSGV, IVAG…LFFL, ILVS…QGWV, LIDW…LFFA, and FIPL…SGVI.

Belongs to the complex I subunit 1 family. In terms of assembly, NDH-1 is composed of 14 different subunits. Subunits NuoA, H, J, K, L, M, N constitute the membrane sector of the complex.

Its subcellular location is the cell inner membrane. The enzyme catalyses a quinone + NADH + 5 H(+)(in) = a quinol + NAD(+) + 4 H(+)(out). In terms of biological role, NDH-1 shuttles electrons from NADH, via FMN and iron-sulfur (Fe-S) centers, to quinones in the respiratory chain. The immediate electron acceptor for the enzyme in this species is believed to be ubiquinone. Couples the redox reaction to proton translocation (for every two electrons transferred, four hydrogen ions are translocated across the cytoplasmic membrane), and thus conserves the redox energy in a proton gradient. This subunit may bind ubiquinone. The sequence is that of NADH-quinone oxidoreductase subunit H from Xylella fastidiosa (strain M12).